We begin with the raw amino-acid sequence, 283 residues long: Dihydropteroate synthase type-1 (283 aa).

One can recognise a Pterin-binding domain in the interval 6 to 262 (VTVFGILNLT…APGDLRSAIT (257 aa)). N13 serves as a coordination point for Mg(2+). Residues D86, N105, D177, K216, and 250-252 (RTH) contribute to the (7,8-dihydropterin-6-yl)methyl diphosphate site.

It belongs to the DHPS family. As to quaternary structure, homodimer or homotrimer. Mg(2+) is required as a cofactor.

The catalysed reaction is (7,8-dihydropterin-6-yl)methyl diphosphate + 4-aminobenzoate = 7,8-dihydropteroate + diphosphate. Its pathway is cofactor biosynthesis; tetrahydrofolate biosynthesis; 7,8-dihydrofolate from 2-amino-4-hydroxy-6-hydroxymethyl-7,8-dihydropteridine diphosphate and 4-aminobenzoate: step 1/2. Functionally, catalyzes the condensation of para-aminobenzoate (pABA) with 6-hydroxymethyl-7,8-dihydropterin diphosphate (DHPt-PP) to form 7,8-dihydropteroate (H2Pte), the immediate precursor of folate derivatives. Implicated in resistance to sulfonamide. The sequence is that of Dihydropteroate synthase type-1 (sulI) from Mycolicibacterium fortuitum (Mycobacterium fortuitum).